The chain runs to 365 residues: Ribosomal RNA large subunit methyltransferase F (365 aa).

Positions 1 to 50 (MSKPAVKSVPSATAKTATRAANPRQKAKAPKQAKPEGKGRAKPSKDKPRA) are disordered. A compositionally biased stretch (basic and acidic residues) spans 33-50 (AKPEGKGRAKPSKDKPRA).

This sequence belongs to the methyltransferase superfamily. METTL16/RlmF family.

It localises to the cytoplasm. The enzyme catalyses adenosine(1618) in 23S rRNA + S-adenosyl-L-methionine = N(6)-methyladenosine(1618) in 23S rRNA + S-adenosyl-L-homocysteine + H(+). Its function is as follows. Specifically methylates the adenine in position 1618 of 23S rRNA. The chain is Ribosomal RNA large subunit methyltransferase F from Shewanella baltica (strain OS195).